A 695-amino-acid chain; its full sequence is Elongation factor G (695 aa).

The 280-residue stretch at 10 to 289 (KNLRNIGIMA…AVVAWMPSPL (280 aa)) folds into the tr-type G domain. Residues 19 to 26 (AHIDAGKT), 83 to 87 (DTPGH), and 137 to 140 (NKMD) contribute to the GTP site.

This sequence belongs to the TRAFAC class translation factor GTPase superfamily. Classic translation factor GTPase family. EF-G/EF-2 subfamily.

It localises to the cytoplasm. In terms of biological role, catalyzes the GTP-dependent ribosomal translocation step during translation elongation. During this step, the ribosome changes from the pre-translocational (PRE) to the post-translocational (POST) state as the newly formed A-site-bound peptidyl-tRNA and P-site-bound deacylated tRNA move to the P and E sites, respectively. Catalyzes the coordinated movement of the two tRNA molecules, the mRNA and conformational changes in the ribosome. The polypeptide is Elongation factor G (Protochlamydia amoebophila (strain UWE25)).